The sequence spans 676 residues: Probable ERAD-associated E3 ubiquitin-protein ligase ASI1 (676 aa).

Topologically, residues 1–78 are perinuclear space; that stretch reads MSTNILQHVK…TLQLAKVGIR (78 aa). Residues Asn-24, Asn-34, Asn-46, and Asn-66 are each glycosylated (N-linked (GlcNAc...) asparagine). Residues 79-99 traverse the membrane as a helical segment; the sequence is MFFSYSVSKYAVLCFSTAIIL. Residues 100–126 are Nuclear-facing; it reads NRLTVMSSLRSNSTNIRLPLWSKTLLH. A helical membrane pass occupies residues 127–147; the sequence is LVATLSLVKALLQILSQFGLM. Over 148-156 the chain is Perinuclear space; that stretch reads HELHVSDTD. A helical membrane pass occupies residues 157–177; sequence FYALSVYLFVALSDCIEIFIS. Over 178-181 the chain is Nuclear; that stretch reads STTN. A helical membrane pass occupies residues 182–202; sequence VPSLICSDFSIWGLSLNLYII. The Perinuclear space segment spans residues 203-277; sequence SKMPAGQQHI…NICLIHNYFP (75 aa). Residues 278 to 298 form a helical membrane-spanning segment; that stretch reads GFFYISTILLASIGIFLKALF. Residues 299 to 676 are Nuclear-facing; the sequence is TSNPFRSLYS…VKGYSKLNIV (378 aa). Residues 624-664 form an RING-type; atypical zinc finger; it reads CLICKVNKRNIVTWPCRCLALCDDCRISLGYKGFATCVSCD.

In terms of assembly, component of the Asi complex, which contains ASI1, ASI2 and ASI3. Interacts directly with ASI1.

Its subcellular location is the nucleus inner membrane. It carries out the reaction S-ubiquitinyl-[E2 ubiquitin-conjugating enzyme]-L-cysteine + [acceptor protein]-L-lysine = [E2 ubiquitin-conjugating enzyme]-L-cysteine + N(6)-ubiquitinyl-[acceptor protein]-L-lysine.. In terms of biological role, part of the nuclear inner membrane (INM)-specific branch of the ER-associated degradation (ERAD) pathway, required for the elimination of misfolded proteins in the INM, a specialized ER subdomain. Required for ERG11 degradation. Negative regulator of SPS-sensor signaling. Together with ASI2 and ASI3, prevents the unprocessed precursor forms of STP1 and STP2 that escape cytoplasmic anchoring from inducing SPS-sensor-regulated genes in the absence of inducing signals. Controls amino acid permease (AAP) gene expression in response to amino acid availability, a process mediated by the transcription factors STP1 and STP1. This Saccharomyces cerevisiae (strain ATCC 204508 / S288c) (Baker's yeast) protein is Probable ERAD-associated E3 ubiquitin-protein ligase ASI1 (ASI3).